The chain runs to 1026 residues: Multidrug resistance protein MdtC (1026 aa).

A run of 11 helical transmembrane segments spans residues isoleucine 15–alanine 35, glutamate 333–leucine 353, leucine 360–cysteine 380, leucine 387–leucine 407, valine 431–leucine 451, phenylalanine 463–proline 483, leucine 528–proline 548, leucine 853–serine 873, leucine 897–valine 917, proline 953–glycine 973, and isoleucine 984–valine 1004.

The protein belongs to the resistance-nodulation-cell division (RND) (TC 2.A.6) family. MdtC subfamily. Part of a tripartite efflux system composed of MdtA, MdtB and MdtC. MdtC forms a heteromultimer with MdtB.

The protein resides in the cell inner membrane. The sequence is that of Multidrug resistance protein MdtC from Salmonella paratyphi B (strain ATCC BAA-1250 / SPB7).